A 95-amino-acid polypeptide reads, in one-letter code: uncharacterized protein (95 aa).

The segment at 1-64 (MEIDDIFASK…PKGASGRKRT (64 aa)) is disordered. Positions 18 to 28 (KSNDSKSEAKA) are enriched in basic and acidic residues. Polar residues predominate over residues 35–49 (TKSTPSRPKPTNNQD).

This is an uncharacterized protein from Schizosaccharomyces pombe (strain 972 / ATCC 24843) (Fission yeast).